Consider the following 284-residue polypeptide: Bifunctional protein FolD (284 aa).

NADP(+) contacts are provided by residues 166–168 (GAS) and isoleucine 232.

Belongs to the tetrahydrofolate dehydrogenase/cyclohydrolase family. As to quaternary structure, homodimer.

It catalyses the reaction (6R)-5,10-methylene-5,6,7,8-tetrahydrofolate + NADP(+) = (6R)-5,10-methenyltetrahydrofolate + NADPH. It carries out the reaction (6R)-5,10-methenyltetrahydrofolate + H2O = (6R)-10-formyltetrahydrofolate + H(+). The protein operates within one-carbon metabolism; tetrahydrofolate interconversion. Its function is as follows. Catalyzes the oxidation of 5,10-methylenetetrahydrofolate to 5,10-methenyltetrahydrofolate and then the hydrolysis of 5,10-methenyltetrahydrofolate to 10-formyltetrahydrofolate. The polypeptide is Bifunctional protein FolD (Shewanella sp. (strain MR-7)).